The following is a 579-amino-acid chain: Cyclin-T1-5 (579 aa).

Disordered stretches follow at residues 1–27 (MAGV…HEKQ) and 271–419 (RVPA…GDAL). Polar residues predominate over residues 11 to 20 (YSESGVSSHS). Low complexity predominate over residues 274 to 283 (ASQGSEVESS). Over residues 306-334 (SRQTSSVRSTHEQSNSDNHGGSSKGVLNQ) the composition is skewed to polar residues. 2 stretches are compositionally biased toward basic and acidic residues: residues 349–380 (DNKE…EAPH) and 389–414 (PGKD…RNVD). The residue at position 423 (serine 423) is a Phosphoserine. Composition is skewed to basic and acidic residues over residues 474–512 (DEKT…KNTE), 538–556 (KQSE…ESHK), and 563–579 (HHGD…NNHS). Residues 474–579 (DEKTKERKVQ…RRHSQENNHS (106 aa)) form a disordered region.

The protein belongs to the cyclin family. Cyclin T subfamily.

The polypeptide is Cyclin-T1-5 (CYCT1-5) (Arabidopsis thaliana (Mouse-ear cress)).